The chain runs to 501 residues: Dynein regulatory complex subunit 5 (501 aa).

Over residues M1–K23 the composition is skewed to polar residues. 2 disordered regions span residues M1–A56 and P203–E222. Low complexity predominate over residues S24–G34. Over residues P35–S49 the composition is skewed to polar residues. 5 LRR repeats span residues V308–D321, R335–A355, N363–A383, C391–S411, and T419–L439.

It belongs to the DRC5 family. As to quaternary structure, component of the nexin-dynein regulatory complex (N-DRC). Interacts with DRC1. Interacts with FBXL13/DRC6, DRC3 and DRC7.

The protein resides in the cell projection. Its subcellular location is the cilium. The protein localises to the flagellum. It is found in the cytoplasm. It localises to the cytoskeleton. The protein resides in the flagellum axoneme. In terms of biological role, component of the nexin-dynein regulatory complex (N-DRC) a key regulator of ciliary/flagellar motility which maintains the alignment and integrity of the distal axoneme and regulates microtubule sliding in motile axonemes. May play a role in the assembly of N-DRC. May be required for sperm motility. In Macaca fascicularis (Crab-eating macaque), this protein is Dynein regulatory complex subunit 5 (TCTE1).